We begin with the raw amino-acid sequence, 245 residues long: Pyridoxine 5'-phosphate synthase (245 aa).

Residue Asn7 participates in 3-amino-2-oxopropyl phosphate binding. 9–10 (DH) lines the 1-deoxy-D-xylulose 5-phosphate pocket. Arg18 provides a ligand contact to 3-amino-2-oxopropyl phosphate. Residue His43 is the Proton acceptor of the active site. 1-deoxy-D-xylulose 5-phosphate contacts are provided by Arg45 and His50. Glu70 (proton acceptor) is an active-site residue. Thr100 is a binding site for 1-deoxy-D-xylulose 5-phosphate. His190 functions as the Proton donor in the catalytic mechanism. 3-amino-2-oxopropyl phosphate contacts are provided by residues Gly191 and 212–213 (GH).

Belongs to the PNP synthase family. In terms of assembly, homooctamer; tetramer of dimers.

It is found in the cytoplasm. The catalysed reaction is 3-amino-2-oxopropyl phosphate + 1-deoxy-D-xylulose 5-phosphate = pyridoxine 5'-phosphate + phosphate + 2 H2O + H(+). It participates in cofactor biosynthesis; pyridoxine 5'-phosphate biosynthesis; pyridoxine 5'-phosphate from D-erythrose 4-phosphate: step 5/5. Catalyzes the complicated ring closure reaction between the two acyclic compounds 1-deoxy-D-xylulose-5-phosphate (DXP) and 3-amino-2-oxopropyl phosphate (1-amino-acetone-3-phosphate or AAP) to form pyridoxine 5'-phosphate (PNP) and inorganic phosphate. The chain is Pyridoxine 5'-phosphate synthase from Prochlorococcus marinus (strain NATL2A).